We begin with the raw amino-acid sequence, 54 residues long: Large ribosomal subunit protein bL33A (54 aa).

This sequence belongs to the bacterial ribosomal protein bL33 family.

In Mycobacterium bovis (strain ATCC BAA-935 / AF2122/97), this protein is Large ribosomal subunit protein bL33A (rpmG1).